A 1516-amino-acid chain; its full sequence is EF-hand calcium-binding domain-containing protein 6 (1516 aa).

The interval 1–23 is disordered; sequence MKRNGTRLNFAKANSTKSGSTRA. The segment covering 12–21 has biased composition (polar residues); sequence KANSTKSGST. 5 consecutive EF-hand domains span residues 96–131, 197–232, 321–356, 444–462, and 528–563; these read SRRD…FLIP, RNMR…FCLR, KSYE…FIYR, SGHI…MVAK, and RNLQ…FCPY. Residues Asp-109, Asn-111, Asn-113, Met-115, Asp-120, Asp-210, Asn-212, Thr-214, and Glu-221 each contribute to the Ca(2+) site. Residues 618–638 are disordered; it reads EEPGQQDERTQPSGEKTSEIN. A compositionally biased stretch (polar residues) spans 628–638; it reads QPSGEKTSEIN. EF-hand domains lie at 674 to 690, 763 to 798, 905 to 940, 1086 to 1121, 1193 to 1228, and 1229 to 1264; these read KINQ…SGMP, ESFR…LQLN, LTPR…RYSP, SSQP…VCQK, SHYH…HIQI, and LTDE…ERVP. The Ca(2+) site is built by Asp-776, Asp-778, Asp-780, and Asp-787. A Phosphothreonine modification is found at Thr-906. The disordered stretch occupies residues 1263–1318; the sequence is VPSPPMAAGDSGESTMAQRGSSAPEFSQGTRSNLYSPPRDSRVGLKSRSHPCTPVG. Ser-1265 is modified (phosphoserine). Over residues 1274–1297 the composition is skewed to polar residues; sequence GESTMAQRGSSAPEFSQGTRSNLY. Residue Ser-1311 is modified to Phosphoserine. Phosphothreonine occurs at positions 1315 and 1319. The interaction with PARK7 stretch occupies residues 1318-1516; that stretch reads GTPPLQNCEP…YNDFLRAFLQ (199 aa). EF-hand domains lie at 1348-1373, 1374-1409, 1454-1484, and 1485-1516; these read KEKD…FKLD, ISRE…LLKA, MRRS…YSIN, and LSEE…AFLQ. An interaction with AR region spans residues 1422–1516; that stretch reads NADKMKEAGM…YNDFLRAFLQ (95 aa). Asp-1462, Asn-1464, Thr-1466, and Asp-1473 together coordinate Ca(2+).

Microtubule inner protein component of sperm flagellar doublet microtubules. Binds PARK7. Part of a ternary complex containing PARK7, EFCAB6/DJBP and AR.

It is found in the nucleus. It localises to the cytoplasm. The protein localises to the cytoskeleton. Its subcellular location is the flagellum axoneme. Its function is as follows. Negatively regulates the androgen receptor by recruiting histone deacetylase complex, and protein DJ-1 antagonizes this inhibition by abrogation of this complex. Microtubule inner protein (MIP) part of the dynein-decorated doublet microtubules (DMTs) in cilia axoneme, which is required for motile cilia beating. This is EF-hand calcium-binding domain-containing protein 6 (Efcab6) from Mus musculus (Mouse).